The primary structure comprises 295 residues: Ribosomal RNA small subunit methyltransferase A (295 aa).

S-adenosyl-L-methionine is bound by residues N31, L33, G58, E79, D104, and N129.

Belongs to the class I-like SAM-binding methyltransferase superfamily. rRNA adenine N(6)-methyltransferase family. RsmA subfamily.

Its subcellular location is the cytoplasm. It catalyses the reaction adenosine(1518)/adenosine(1519) in 16S rRNA + 4 S-adenosyl-L-methionine = N(6)-dimethyladenosine(1518)/N(6)-dimethyladenosine(1519) in 16S rRNA + 4 S-adenosyl-L-homocysteine + 4 H(+). Functionally, specifically dimethylates two adjacent adenosines (A1518 and A1519) in the loop of a conserved hairpin near the 3'-end of 16S rRNA in the 30S particle. May play a critical role in biogenesis of 30S subunits. The polypeptide is Ribosomal RNA small subunit methyltransferase A (Leuconostoc mesenteroides subsp. mesenteroides (strain ATCC 8293 / DSM 20343 / BCRC 11652 / CCM 1803 / JCM 6124 / NCDO 523 / NBRC 100496 / NCIMB 8023 / NCTC 12954 / NRRL B-1118 / 37Y)).